Here is a 547-residue protein sequence, read N- to C-terminus: Beta,beta-carotene 15,15'-dioxygenase (547 aa).

Residues H172, H237, H308, and H514 each contribute to the Fe cation site. The segment covering 528–540 has biased composition (basic and acidic residues); sequence QAASEEQRDRASD. The interval 528–547 is disordered; that stretch reads QAASEEQRDRASDCHGAPLT.

This sequence belongs to the carotenoid oxygenase family. Fe(2+) is required as a cofactor. As to expression, highly expressed in retinal pigment epithelium. Also expressed in kidney, testis, liver, brain, small intestine and colon.

The protein resides in the cytoplasm. The protein localises to the cytosol. It catalyses the reaction all-trans-beta-carotene + O2 = 2 all-trans-retinal. It participates in cofactor metabolism; retinol metabolism. Functionally, symmetrically cleaves beta-carotene into two molecules of retinal using a dioxygenase mechanism. This is Beta,beta-carotene 15,15'-dioxygenase from Homo sapiens (Human).